Reading from the N-terminus, the 190-residue chain is GTP cyclohydrolase 1 (190 aa).

Positions 78, 81, and 150 each coordinate Zn(2+).

Belongs to the GTP cyclohydrolase I family. Toroid-shaped homodecamer, composed of two pentamers of five dimers.

It carries out the reaction GTP + H2O = 7,8-dihydroneopterin 3'-triphosphate + formate + H(+). The protein operates within cofactor biosynthesis; 7,8-dihydroneopterin triphosphate biosynthesis; 7,8-dihydroneopterin triphosphate from GTP: step 1/1. Its activity is regulated as follows. K(+) ions moderately increases the Vmax, whereas UTP and Ca(2+) and Mg(2+) ions drastically increase the Km for GTP. The sequence is that of GTP cyclohydrolase 1 (folE) from Bacillus subtilis (strain 168).